We begin with the raw amino-acid sequence, 142 residues long: Large ribosomal subunit protein uL13 (142 aa).

It belongs to the universal ribosomal protein uL13 family. In terms of assembly, part of the 50S ribosomal subunit.

In terms of biological role, this protein is one of the early assembly proteins of the 50S ribosomal subunit, although it is not seen to bind rRNA by itself. It is important during the early stages of 50S assembly. The sequence is that of Large ribosomal subunit protein uL13 from Vesicomyosocius okutanii subsp. Calyptogena okutanii (strain HA).